Here is a 327-residue protein sequence, read N- to C-terminus: GMP reductase (327 aa).

The active-site Thioimidate intermediate is the Cys175. Ile204–Val227 lines the NADP(+) pocket.

Belongs to the IMPDH/GMPR family. GuaC type 2 subfamily.

The catalysed reaction is IMP + NH4(+) + NADP(+) = GMP + NADPH + 2 H(+). In terms of biological role, catalyzes the irreversible NADPH-dependent deamination of GMP to IMP. It functions in the conversion of nucleobase, nucleoside and nucleotide derivatives of G to A nucleotides, and in maintaining the intracellular balance of A and G nucleotides. The sequence is that of GMP reductase from Bacillus cereus (strain ZK / E33L).